Here is a 241-residue protein sequence, read N- to C-terminus: Orotidine 5'-phosphate decarboxylase (241 aa).

Substrate is bound by residues Asp16, Lys37, 64-73 (DLKFHDIPTT), Thr128, Arg190, Gln199, Gly219, and Arg220. Residue Lys66 is the Proton donor of the active site.

It belongs to the OMP decarboxylase family. Type 1 subfamily. As to quaternary structure, homodimer.

It catalyses the reaction orotidine 5'-phosphate + H(+) = UMP + CO2. It participates in pyrimidine metabolism; UMP biosynthesis via de novo pathway; UMP from orotate: step 2/2. Its function is as follows. Catalyzes the decarboxylation of orotidine 5'-monophosphate (OMP) to uridine 5'-monophosphate (UMP). The polypeptide is Orotidine 5'-phosphate decarboxylase (Prochlorococcus marinus (strain NATL1A)).